The primary structure comprises 508 residues: Histone acetyltransferase type B catalytic subunit (508 aa).

Interaction with histone H4 N-terminus stretches follow at residues 44-46 and 207-209; these read EKE and YRY. Acetyl-CoA is bound by residues 249–251 and 256–262; these read FII and QQKGLGS. Glu-284 functions as the Proton donor/acceptor in the catalytic mechanism. Disordered regions lie at residues 364–399 and 461–508; these read SVRPGLGAPEDEDYEEQSGRSKSKGHEKALPKPTPE and QADG…SGHA. Over residues 387–399 the composition is skewed to basic and acidic residues; the sequence is KGHEKALPKPTPE.

Belongs to the HAT1 family. Component of the HAT-B complex composed of at least hat-1 and hat-2. The HAT-B complex binds to histone H4 tail.

The protein localises to the cytoplasm. Its subcellular location is the nucleus. It carries out the reaction L-lysyl-[protein] + acetyl-CoA = N(6)-acetyl-L-lysyl-[protein] + CoA + H(+). Functionally, catalytic component of the histone acetylase B (HAT-B) complex. Acetylates 'Lys-12' of histone H4 which is required for telomeric silencing. Has intrinsic substrate specificity that modifies lysine in recognition sequence GXGKXG. Involved in DNA double-strand break repair. The chain is Histone acetyltransferase type B catalytic subunit (hat-1) from Neurospora crassa (strain ATCC 24698 / 74-OR23-1A / CBS 708.71 / DSM 1257 / FGSC 987).